A 58-amino-acid polypeptide reads, in one-letter code: Sodium/potassium-transporting ATPase subunit gamma (58 aa).

The helical transmembrane segment at 20–39 threads the bilayer; sequence NGGLIFAALAFIVGLVIILS.

The protein belongs to the FXYD family. As to quaternary structure, regulatory subunit of the sodium/potassium-transporting ATPase which is composed of a catalytic alpha subunit, an auxiliary non-catalytic beta subunit and an additional regulatory subunit. Highest levels expressed in the kidney and spleen. Restricted to the basolateral membrane in renal epithelial cells and varies in its level of expression along the nephron.

It localises to the membrane. Its function is as follows. May be involved in forming the receptor site for cardiac glycoside binding or may modulate the transport function of the sodium ATPase. The chain is Sodium/potassium-transporting ATPase subunit gamma (FXYD2) from Bos taurus (Bovine).